The sequence spans 848 residues: Aryl hydrocarbon receptor (848 aa).

The propeptide occupies 1 to 9 (MSSGANITY). The tract at residues 1-38 (MSSGANITYASRKRRKPVQKTVKPIPAEGIKSNPSKRH) is disordered. Short sequence motifs (nuclear localization signal) lie at residues 12 to 15 (RKRR) and 36 to 41 (KRHRDR). Positions 26-79 (PAEGIKSNPSKRHRDRLNTELDRLASLLPFPQDVINKLDKLSVLRLSVSYLRAK) constitute a bHLH domain. Positions 37–65 (RHRDRLNTELDRLASLLPFPQDVINKLDK) are DNA-binding. 3 required for maintaining the overall integrity of the AHR:ARNT heterodimer and its transcriptional activity regions span residues 49 to 81 (LASL…AKSF), 116 to 124 (LLQALNGFV), and 260 to 262 (FAI). The short motif at 63 to 71 (LDKLSVLRL) is the Nuclear export signal element. The 64-residue stretch at 116–179 (LLQALNGFVL…RQLHWALNPD (64 aa)) folds into the PAS 1 domain. Residues 269-336 (PSILEIRTKN…CAESHIRMIK (68 aa)) enclose the PAS 2 domain. The PAC domain maps to 342–380 (MTVFRLFAKHSRWRWVQSNARLIYRNGRPDYIIATQRPL). Residues 421–449 (LPIRTKSNTSRKDWAPQSTPSKDSFHPSS) form a disordered region. Residues 436–449 (PQSTPSKDSFHPSS) show a composition bias toward polar residues.

Homodimer. Heterodimer; efficient DNA binding requires dimerization with another bHLH protein. Interacts with ARNT; the heterodimer ARNT:AHR binds to core DNA sequence 5'-TGCGTG-3' within the dioxin response element (DRE) of target gene promoters and activates their transcription. Binds MYBBP1A. Interacts with coactivators including SRC-1, RIP140 and NOCA7, and with the corepressor SMRT. Interacts with NEDD8 and IVNS1ABP. Interacts with BMAL1. Interacts with HSP90AB1. Interacts with TIPARP; leading to mono-ADP-ribosylation of AHR and subsequent inhibition of AHR. Post-translationally, mono-ADP-ribosylated, leading to inhibit transcription activator activity of AHR. As to expression, expressed in all tissues tested including brain, heart, kidney, liver, lung, muscle, ovary, skin, spleen and thymus.

The protein localises to the cytoplasm. Its subcellular location is the nucleus. In terms of biological role, ligand-activated transcription factor that enables cells to adapt to changing conditions by sensing compounds from the environment, diet, microbiome and cellular metabolism, and which plays important roles in development, immunity and cancer. Upon ligand binding, translocates into the nucleus, where it heterodimerizes with ARNT and induces transcription by binding to xenobiotic response elements (XRE). Regulates a variety of biological processes, including angiogenesis, hematopoiesis, drug and lipid metabolism, cell motility and immune modulation. Xenobiotics can act as ligands: upon xenobiotic-binding, activates the expression of multiple phase I and II xenobiotic chemical metabolizing enzyme genes (such as the CYP1A1 gene). Mediates biochemical and toxic effects of halogenated aromatic hydrocarbons. Next to xenobiotics, natural ligands derived from plants, microbiota, and endogenous metabolism are potent AHR agonists. Tryptophan (Trp) derivatives constitute an important class of endogenous AHR ligands. Acts as a negative regulator of anti-tumor immunity: indoles and kynurenic acid generated by Trp catabolism act as ligand and activate AHR, thereby promoting AHR-driven cancer cell motility and suppressing adaptive immunity. Regulates the circadian clock by inhibiting the basal and circadian expression of the core circadian component PER1. Inhibits PER1 by repressing the CLOCK-BMAL1 heterodimer mediated transcriptional activation of PER1. The heterodimer ARNT:AHR binds to core DNA sequence 5'-TGCGTG-3' within the dioxin response element (DRE) of target gene promoters and activates their transcription. This chain is Aryl hydrocarbon receptor (Ahr), found in Mus musculus (Mouse).